The sequence spans 252 residues: uncharacterized protein (252 aa).

This is an uncharacterized protein from Saccharolobus islandicus (Sulfolobus islandicus).